A 226-amino-acid polypeptide reads, in one-letter code: Chalcone--flavanone isomerase 1B-1 (226 aa).

Substrate is bound by residues threonine 50, asparagine 115, and threonine 192.

This sequence belongs to the chalcone isomerase family.

The enzyme catalyses a chalcone = a flavanone.. The protein operates within secondary metabolite biosynthesis; flavonoid biosynthesis. Functionally, catalyzes the intramolecular cyclization of bicyclic chalcones into tricyclic (S)-flavanones. Responsible for the isomerization of 4,2',4',6'-tetrahydroxychalcone (also termed chalcone) into naringenin. In Glycine max (Soybean), this protein is Chalcone--flavanone isomerase 1B-1 (CHI1B1).